Consider the following 400-residue polypeptide: LIM/homeobox protein Lhx3 (400 aa).

2 LIM zinc-binding domains span residues 34-84 (CAGC…CKDD) and 93-147 (CAAC…CKAD). Ser-74 is modified (phosphoserine). The homeobox DNA-binding region spans 160–219 (AKRPRTTITAKQLETLKSAYNTSPKPARHVREQLSSETGLDMRVVQVWFQNRRAKEKRLK). Disordered stretches follow at residues 215–280 (EKRL…SSLG) and 297–400 (TLDH…HAQF). Position 230 is a phosphotyrosine (Tyr-230). Residues Ser-237 and Ser-241 each carry the phosphoserine modification. 2 stretches are compositionally biased toward pro residues: residues 319-334 (GIPP…PGPQ) and 352-361 (SGPPGGPPPM). Positions 368–380 (GPSSDLSTESSSG) are enriched in polar residues.

In terms of assembly, interacts with POU1F1. At neuronal promoters, interacts with LDB1, in motor neurons LDB1 is displaced by ISL1 and a ternary complex is formed in which ISL1 contacts both LHX3 and LDB1; allosteric structural changes in the DNA binding domain of LHX3, induced by the ISL1-LHX3 interaction, may explain differences in sequence specificity of the different complexes. Interacts with LDB2. May interact with CITED2/MRG1. As to expression, mostly expressed in the pituitary anterior and intermediate lobes. It is also expressed in the pineal gland and transiently in the primordia of motor neurons including the spinal cord, pons and medulla oblongata.

It is found in the nucleus. In terms of biological role, transcription factor. Recognizes and binds to the consensus sequence motif 5'-AATTAATTA-3' in the regulatory elements of target genes, such as glycoprotein hormones alpha chain CGA and visual system homeobox CHX10, positively modulating transcription; transcription can be co-activated by LDB2. Synergistically enhances transcription from the prolactin promoter in cooperation with POU1F1/Pit-1. Required for the establishment of the specialized cells of the pituitary gland and the nervous system. Involved in the development of interneurons and motor neurons in cooperation with LDB1 and ISL1. This Mus musculus (Mouse) protein is LIM/homeobox protein Lhx3 (Lhx3).